Consider the following 422-residue polypeptide: Calpain-2 catalytic subunit (422 aa).

Positions 1 to 66 (QKLIRIRNPW…YSRLEICNLT (66 aa)) constitute a Calpain catalytic domain. N8 is a catalytic residue. 3 residues coordinate Ca(2+): E14, D21, and E45. The segment at 67–236 (PDTLTSDTYK…KKADYQAVDD (170 aa)) is domain III. The interval 237 to 251 (EIEADLEEADVSEDD) is linker. The tract at residues 252–422 (IDDGFRRLFA…LISWLCFSVL (171 aa)) is domain IV. 16 residues coordinate Ca(2+): A264, D267, E269, E274, D307, D309, T311, K313, E318, D337, D339, S341, T343, E348, D380, and N383. EF-hand domains lie at 294–327 (LSIETCKIMVDMLDSDGTGKLGLKEFYVLWTKIQ) and 324–359 (TKIQKYQKIYREIDVDRSGTMNSYEMRKALEEAGFK). In terms of domain architecture, EF-hand 3 spans 389–422 (VRLETLFKIFKQLDPDNTGMIQLDLISWLCFSVL).

The protein belongs to the peptidase C2 family. As to quaternary structure, forms a heterodimer with a small (regulatory) subunit (CAPNS1). Interacts with CPEB3; this leads to cleavage of CPEB3. Ca(2+) serves as cofactor. As to expression, ubiquitous.

It is found in the cytoplasm. It localises to the cell membrane. The catalysed reaction is Broad endopeptidase specificity.. With respect to regulation, activated by 200-1000 micromolar concentrations of calcium and inhibited by calpastatin. Calcium-regulated non-lysosomal thiol-protease which catalyzes limited proteolysis of substrates involved in cytoskeletal remodeling and signal transduction. Proteolytically cleaves MYOC at 'Arg-226'. Proteolytically cleaves CPEB3 following neuronal stimulation which abolishes CPEB3 translational repressor activity, leading to translation of CPEB3 target mRNAs. This Oryctolagus cuniculus (Rabbit) protein is Calpain-2 catalytic subunit (CAPN2).